We begin with the raw amino-acid sequence, 484 residues long: MKLIVKTFQEITIKSRPVRKRFIRQLAKNIRAVLRDLDPELKVEGEWDNLEVETAVVDAKARREMIERLTCTPGIGHFLEVHEYPLGDFDDILAKCKAHFGDQLAGKTFAVRCKRAGKHAFTSMEVERYVGSGLRRECGAAGIDLKQPEVEVRMEIRLDRLFVIHRQHPGLGGYPLGALEQVLVLMSGGFDSTVAAYQMMRRGMISHFVFFNLGGRAHELGVMEVAHYLWEKYGRSQRVLFVSVPFEEVVGEILTKVDDSYMGVTLKRMMLRAASRVAERLELDALVTGEAISQVSSQTLPNLSVIDRVTDTLVLRPLIVSHKQDIIDTARQIGTAEFARHMPEYCGVISVNPTTQAKPYRVEHEESKFDMAVLERALERATQRTVDRVIDELGQDLQVEEVGEVLPGQIVIDIRHPDAQEDEPLALEGVEVQALPFYAINSRFKELDANRQYLLYCDKGVMSRLHAHHLLNEGHTNVRVYRPA.

Positions 63–167 (REMIERLTCT…LDRLFVIHRQ (105 aa)) constitute a THUMP domain. ATP is bound by residues 185 to 186 (LM), K267, G289, and Q298. Residues C346 and C457 are joined by a disulfide bond. The Rhodanese domain maps to 405 to 483 (VLPGQIVIDI…GHTNVRVYRP (79 aa)). The active-site Cysteine persulfide intermediate is the C457.

The protein belongs to the ThiI family.

Its subcellular location is the cytoplasm. The catalysed reaction is [ThiI sulfur-carrier protein]-S-sulfanyl-L-cysteine + a uridine in tRNA + 2 reduced [2Fe-2S]-[ferredoxin] + ATP + H(+) = [ThiI sulfur-carrier protein]-L-cysteine + a 4-thiouridine in tRNA + 2 oxidized [2Fe-2S]-[ferredoxin] + AMP + diphosphate. The enzyme catalyses [ThiS sulfur-carrier protein]-C-terminal Gly-Gly-AMP + S-sulfanyl-L-cysteinyl-[cysteine desulfurase] + AH2 = [ThiS sulfur-carrier protein]-C-terminal-Gly-aminoethanethioate + L-cysteinyl-[cysteine desulfurase] + A + AMP + 2 H(+). It participates in cofactor biosynthesis; thiamine diphosphate biosynthesis. Catalyzes the ATP-dependent transfer of a sulfur to tRNA to produce 4-thiouridine in position 8 of tRNAs, which functions as a near-UV photosensor. Also catalyzes the transfer of sulfur to the sulfur carrier protein ThiS, forming ThiS-thiocarboxylate. This is a step in the synthesis of thiazole, in the thiamine biosynthesis pathway. The sulfur is donated as persulfide by IscS. The chain is tRNA sulfurtransferase from Pseudomonas aeruginosa (strain LESB58).